The sequence spans 146 residues: Large ribosomal subunit protein uL15 (146 aa).

The interval 1-56 is disordered; sequence MKLHELRAAEGANKASKRVGRGTGSGLGKTSGKGQNGQNSRSGGGVRPGFEGGQMP. Gly residues-rich tracts occupy residues 21–35 and 42–52; these read RGTGSGLGKTSGKGQ and SGGGVRPGFEG.

It belongs to the universal ribosomal protein uL15 family. In terms of assembly, part of the 50S ribosomal subunit.

Its function is as follows. Binds to the 23S rRNA. The protein is Large ribosomal subunit protein uL15 of Clostridium botulinum (strain Loch Maree / Type A3).